A 99-amino-acid chain; its full sequence is Nucleoid-associated protein SSU98_0195 (99 aa).

Belongs to the YbaB/EbfC family. In terms of assembly, homodimer.

The protein resides in the cytoplasm. It localises to the nucleoid. Functionally, binds to DNA and alters its conformation. May be involved in regulation of gene expression, nucleoid organization and DNA protection. In Streptococcus suis (strain 98HAH33), this protein is Nucleoid-associated protein SSU98_0195.